Reading from the N-terminus, the 175-residue chain is MPLNIEDKKAVVAEVSAQVAKAQTIVVAEYRGIAVGDLTKLRAAARQQGVYLRVLKNTLARRAVEGTPFAGLAEQMTGPLIYGISEDAVASAKVLNDFAKTNDKLVLRAGSYDGKVLDAAAVKALASIPSRDELIAQLLGVMQAPVSGFARLLAALAAKKAEGAAPAEAEAAAEA.

Belongs to the universal ribosomal protein uL10 family. In terms of assembly, part of the ribosomal stalk of the 50S ribosomal subunit. The N-terminus interacts with L11 and the large rRNA to form the base of the stalk. The C-terminus forms an elongated spine to which L12 dimers bind in a sequential fashion forming a multimeric L10(L12)X complex.

Functionally, forms part of the ribosomal stalk, playing a central role in the interaction of the ribosome with GTP-bound translation factors. The polypeptide is Large ribosomal subunit protein uL10 (Cupriavidus taiwanensis (strain DSM 17343 / BCRC 17206 / CCUG 44338 / CIP 107171 / LMG 19424 / R1) (Ralstonia taiwanensis (strain LMG 19424))).